A 204-amino-acid polypeptide reads, in one-letter code: Thymidine kinase (204 aa).

ATP contacts are provided by residues 23-30 and 95-98; these read GSMFSGKT and DEAQ. The active-site Proton acceptor is the E96. Positions 152, 155, 184, and 187 each coordinate Zn(2+).

The protein belongs to the thymidine kinase family. Homotetramer.

It is found in the cytoplasm. The catalysed reaction is thymidine + ATP = dTMP + ADP + H(+). This is Thymidine kinase from Porphyromonas gingivalis (strain ATCC 33277 / DSM 20709 / CIP 103683 / JCM 12257 / NCTC 11834 / 2561).